Here is a 434-residue protein sequence, read N- to C-terminus: Histidinol dehydrogenase (434 aa).

Residues tyrosine 130, glutamine 191, and asparagine 214 each coordinate NAD(+). Positions 237, 259, and 262 each coordinate substrate. Zn(2+)-binding residues include glutamine 259 and histidine 262. Active-site proton acceptor residues include glutamate 327 and histidine 328. Residues histidine 328, aspartate 361, glutamate 415, and histidine 420 each coordinate substrate. Position 361 (aspartate 361) interacts with Zn(2+). Histidine 420 serves as a coordination point for Zn(2+).

The protein belongs to the histidinol dehydrogenase family. The cofactor is Zn(2+).

The catalysed reaction is L-histidinol + 2 NAD(+) + H2O = L-histidine + 2 NADH + 3 H(+). The protein operates within amino-acid biosynthesis; L-histidine biosynthesis; L-histidine from 5-phospho-alpha-D-ribose 1-diphosphate: step 9/9. Functionally, catalyzes the sequential NAD-dependent oxidations of L-histidinol to L-histidinaldehyde and then to L-histidine. The polypeptide is Histidinol dehydrogenase (Cereibacter sphaeroides (strain ATCC 17023 / DSM 158 / JCM 6121 / CCUG 31486 / LMG 2827 / NBRC 12203 / NCIMB 8253 / ATH 2.4.1.) (Rhodobacter sphaeroides)).